A 234-amino-acid chain; its full sequence is Opacity protein V28 (234 aa).

Alanine 1 is a signal peptide.

This sequence belongs to the opacity porin family.

The protein localises to the cell outer membrane. Implicated in a number of adherence functions. OPA proteins are implicated in pathogenesis and are subject to phase variation. This is Opacity protein V28 from Neisseria gonorrhoeae.